The following is a 209-amino-acid chain: Ribosomal RNA large subunit methyltransferase E (209 aa).

Positions 63, 65, 83, 99, and 124 each coordinate S-adenosyl-L-methionine. Residue K164 is the Proton acceptor of the active site.

Belongs to the class I-like SAM-binding methyltransferase superfamily. RNA methyltransferase RlmE family.

It is found in the cytoplasm. It carries out the reaction uridine(2552) in 23S rRNA + S-adenosyl-L-methionine = 2'-O-methyluridine(2552) in 23S rRNA + S-adenosyl-L-homocysteine + H(+). Functionally, specifically methylates the uridine in position 2552 of 23S rRNA at the 2'-O position of the ribose in the fully assembled 50S ribosomal subunit. The polypeptide is Ribosomal RNA large subunit methyltransferase E (Vibrio campbellii (strain ATCC BAA-1116)).